Consider the following 754-residue polypeptide: Glutathione biosynthesis bifunctional protein GshAB (754 aa).

Residues 1 to 333 (MHINQLLQHA…KAQKLNDKIA (333 aa)) are glutamate--cysteine ligase. The ATP-grasp domain occupies 489-752 (KKILRENGYP…LAKLFPEIST (264 aa)). 516–574 (SQIKNKPIVVKPKTTNFGLGISIFETAASHNDYEKALDIAFIEDYSVLVEEFIPGTEYR) is a binding site for ATP. 3 residues coordinate Mg(2+): aspartate 696, glutamate 717, and asparagine 719. Mn(2+)-binding residues include aspartate 696, glutamate 717, and asparagine 719.

The protein in the N-terminal section; belongs to the glutamate--cysteine ligase type 1 family. Type 2 subfamily. Monomer. Requires Mg(2+) as cofactor. Mn(2+) is required as a cofactor.

The enzyme catalyses L-cysteine + L-glutamate + ATP = gamma-L-glutamyl-L-cysteine + ADP + phosphate + H(+). It catalyses the reaction gamma-L-glutamyl-L-cysteine + glycine + ATP = glutathione + ADP + phosphate + H(+). It participates in sulfur metabolism; glutathione biosynthesis; glutathione from L-cysteine and L-glutamate: step 1/2. Its pathway is sulfur metabolism; glutathione biosynthesis; glutathione from L-cysteine and L-glutamate: step 2/2. Functionally, synthesizes glutathione from L-glutamate and L-cysteine via gamma-L-glutamyl-L-cysteine. This chain is Glutathione biosynthesis bifunctional protein GshAB, found in Streptococcus mutans serotype c (strain ATCC 700610 / UA159).